The following is a 457-amino-acid chain: Argininosuccinate lyase (457 aa).

It belongs to the lyase 1 family. Argininosuccinate lyase subfamily.

Its subcellular location is the cytoplasm. The enzyme catalyses 2-(N(omega)-L-arginino)succinate = fumarate + L-arginine. It functions in the pathway amino-acid biosynthesis; L-arginine biosynthesis; L-arginine from L-ornithine and carbamoyl phosphate: step 3/3. The polypeptide is Argininosuccinate lyase (Klebsiella pneumoniae (strain 342)).